The sequence spans 549 residues: Oxygen-dependent choline dehydrogenase (549 aa).

Residue 4–33 (DFVIIGSGSAGSAMASRLSEDGKHTVIVLE) coordinates FAD. The active-site Proton acceptor is H465.

It belongs to the GMC oxidoreductase family. It depends on FAD as a cofactor.

It carries out the reaction choline + A = betaine aldehyde + AH2. The catalysed reaction is betaine aldehyde + NAD(+) + H2O = glycine betaine + NADH + 2 H(+). It participates in amine and polyamine biosynthesis; betaine biosynthesis via choline pathway; betaine aldehyde from choline (cytochrome c reductase route): step 1/1. Involved in the biosynthesis of the osmoprotectant glycine betaine. Catalyzes the oxidation of choline to betaine aldehyde and betaine aldehyde to glycine betaine at the same rate. This Rhizobium rhizogenes (strain K84 / ATCC BAA-868) (Agrobacterium radiobacter) protein is Oxygen-dependent choline dehydrogenase.